A 154-amino-acid chain; its full sequence is Myoglobin (154 aa).

The 147-residue stretch at 2 to 148 folds into the Globin domain; it reads GLSDGEWQLV…FRNDMAAKYK (147 aa). Phosphoserine is present on S4. H65 lines the nitrite pocket. An O2-binding site is contributed by H65. A Phosphothreonine modification is found at T68. Residue H94 participates in heme b binding.

It belongs to the globin family. Monomeric.

The protein localises to the cytoplasm. Its subcellular location is the sarcoplasm. The catalysed reaction is Fe(III)-heme b-[protein] + nitric oxide + H2O = Fe(II)-heme b-[protein] + nitrite + 2 H(+). The enzyme catalyses H2O2 + AH2 = A + 2 H2O. Monomeric heme protein which primary function is to store oxygen and facilitate its diffusion within muscle tissues. Reversibly binds oxygen through a pentacoordinated heme iron and enables its timely and efficient release as needed during periods of heightened demand. Depending on the oxidative conditions of tissues and cells, and in addition to its ability to bind oxygen, it also has a nitrite reductase activity whereby it regulates the production of bioactive nitric oxide. Under stress conditions, like hypoxia and anoxia, it also protects cells against reactive oxygen species thanks to its pseudoperoxidase activity. The polypeptide is Myoglobin (MB) (Ornithorhynchus anatinus (Duckbill platypus)).